Consider the following 530-residue polypeptide: Na(+)/H(+) antiporter NhaB (530 aa).

13 helical membrane-spanning segments follow: residues phenylalanine 13–proline 33, phenylalanine 34–phenylalanine 54, proline 64–alanine 84, leucine 90–methionine 110, leucine 113–leucine 133, cysteine 136–isoleucine 156, leucine 205–proline 225, alanine 234–methionine 254, alanine 306–isoleucine 326, glutamate 351–isoleucine 371, proline 378–glycine 400, alanine 450–isoleucine 470, and alanine 481–leucine 501.

The protein belongs to the NhaB Na(+)/H(+) (TC 2.A.34) antiporter family.

The protein resides in the cell inner membrane. It catalyses the reaction 2 Na(+)(in) + 3 H(+)(out) = 2 Na(+)(out) + 3 H(+)(in). Na(+)/H(+) antiporter that extrudes sodium in exchange for external protons. The sequence is that of Na(+)/H(+) antiporter NhaB from Photobacterium profundum (strain SS9).